A 387-amino-acid chain; its full sequence is Phosphoglycerate kinase (387 aa).

Residues 21–23, arginine 36, 59–62, arginine 113, and arginine 146 contribute to the substrate site; these read DLN and HLGR. ATP contacts are provided by residues lysine 197, glutamate 314, and 340 to 343; that span reads GGDT.

The protein belongs to the phosphoglycerate kinase family. In terms of assembly, monomer.

The protein localises to the cytoplasm. The catalysed reaction is (2R)-3-phosphoglycerate + ATP = (2R)-3-phospho-glyceroyl phosphate + ADP. It functions in the pathway carbohydrate degradation; glycolysis; pyruvate from D-glyceraldehyde 3-phosphate: step 2/5. The chain is Phosphoglycerate kinase from Salmonella schwarzengrund (strain CVM19633).